A 431-amino-acid chain; its full sequence is Glycerol-3-phosphate dehydrogenase [NAD(P)+] (431 aa).

A compositionally biased stretch (polar residues) spans 1–19 (MTSANDKSTDTNVDSTQAE). Positions 1-25 (MTSANDKSTDTNVDSTQAEQKMAEK) are disordered. NADPH contacts are provided by S79, F80, R100, and K173. 2 residues coordinate sn-glycerol 3-phosphate: K173 and G201. A205 serves as a coordination point for NADPH. Residues K256, D309, S319, R320, and N321 each contribute to the sn-glycerol 3-phosphate site. The Proton acceptor role is filled by K256. R320 provides a ligand contact to NADPH. E346 provides a ligand contact to NADPH.

This sequence belongs to the NAD-dependent glycerol-3-phosphate dehydrogenase family.

The protein localises to the cytoplasm. The enzyme catalyses sn-glycerol 3-phosphate + NAD(+) = dihydroxyacetone phosphate + NADH + H(+). It carries out the reaction sn-glycerol 3-phosphate + NADP(+) = dihydroxyacetone phosphate + NADPH + H(+). It functions in the pathway membrane lipid metabolism; glycerophospholipid metabolism. In terms of biological role, catalyzes the reduction of the glycolytic intermediate dihydroxyacetone phosphate (DHAP) to sn-glycerol 3-phosphate (G3P), the key precursor for phospholipid synthesis. In Psychrobacter arcticus (strain DSM 17307 / VKM B-2377 / 273-4), this protein is Glycerol-3-phosphate dehydrogenase [NAD(P)+].